A 608-amino-acid polypeptide reads, in one-letter code: ATP-citrate synthase beta chain protein 2 (608 aa).

Residues 214-234 and 265-291 each bind ATP; these read ILRFNNIPQIKMMVVLGELGG and FKSEVQFGHAGAKSGGEMESAQAKNQA. A Mg(2+)-binding site is contributed by glutamate 231. The Tele-phosphohistidine intermediate role is filled by histidine 273. 292–302 contacts CoA; that stretch reads LIDAGAIVPTS.

It belongs to the succinate/malate CoA ligase alpha subunit family. As to quaternary structure, heterooctamer of 4 alpha and 4 beta chains. In terms of tissue distribution, expressed in trichomes, epidermal leaf cells, anther tapetal cells, stigma and in young vascular bundles of expanding leaves, cotyledons, roots, pedicel of flowers and siliques.

The protein localises to the cytoplasm. Its subcellular location is the cytosol. It catalyses the reaction oxaloacetate + acetyl-CoA + ADP + phosphate = citrate + ATP + CoA. Functionally, ATP citrate-lyase is the primary enzyme responsible for the synthesis of cytosolic acetyl-CoA, used for the elongation of fatty acids and biosynthesis of isoprenoids, flavonoids and malonated derivatives. May supply substrate to the cytosolic acetyl-CoA carboxylase, which generates the malonyl-CoA used for the synthesis of a multitude of compounds, including very long chain fatty acids and flavonoids. Required for normal growth and development and elongation of C18 fatty acids to C20 to C24 fatty acids in seeds. n contrast to all known animal ACL enzymes having a homomeric structure, plant ACLs are composed of alpha and beta chains. This Arabidopsis thaliana (Mouse-ear cress) protein is ATP-citrate synthase beta chain protein 2.